The sequence spans 810 residues: Lon protease (810 aa).

Residues 40–233 form the Lon N-terminal domain; that stretch reads LIIVPVRGFV…MVAKLLAQRI (194 aa). Residue 385-392 participates in ATP binding; it reads GPPGVGKT. Residues 621-802 form the Lon proteolytic domain; the sequence is LSVPGVATGL…DDAMAAAFEG (182 aa). Active-site residues include serine 708 and lysine 751.

Belongs to the peptidase S16 family. Homohexamer. Organized in a ring with a central cavity.

It localises to the cytoplasm. It catalyses the reaction Hydrolysis of proteins in presence of ATP.. In terms of biological role, ATP-dependent serine protease that mediates the selective degradation of mutant and abnormal proteins as well as certain short-lived regulatory proteins. Required for cellular homeostasis and for survival from DNA damage and developmental changes induced by stress. Degrades polypeptides processively to yield small peptide fragments that are 5 to 10 amino acids long. Binds to DNA in a double-stranded, site-specific manner. The polypeptide is Lon protease (Methylocella silvestris (strain DSM 15510 / CIP 108128 / LMG 27833 / NCIMB 13906 / BL2)).